We begin with the raw amino-acid sequence, 695 residues long: D-(-)-3-hydroxybutyrate oligomer hydrolase (695 aa).

Positions 1-17 (MTTHGWGTRILLGAALA) are cleaved as a signal peptide. Residue Ser-308 is the Charge relay system of the active site.

Belongs to the D-(-)-3-hydroxybutyrate oligomer hydrolase family.

The protein localises to the secreted. The enzyme catalyses (3R)-hydroxybutanoate dimer + H2O = 2 (R)-3-hydroxybutanoate + H(+). It participates in lipid metabolism; butanoate metabolism. In terms of biological role, participates in the degradation of poly-3-hydroxybutyrate (PHB). It works downstream of poly(3-hydroxybutyrate) depolymerase, hydrolyzing D(-)-3-hydroxybutyrate oligomers of various length (3HB-oligomers) into 3HB-monomers. The sequence is that of D-(-)-3-hydroxybutyrate oligomer hydrolase from Burkholderia ambifaria (strain ATCC BAA-244 / DSM 16087 / CCUG 44356 / LMG 19182 / AMMD) (Burkholderia cepacia (strain AMMD)).